The primary structure comprises 247 residues: Probable transcriptional regulatory protein lpg1286 (247 aa).

It belongs to the TACO1 family.

Its subcellular location is the cytoplasm. This chain is Probable transcriptional regulatory protein lpg1286, found in Legionella pneumophila subsp. pneumophila (strain Philadelphia 1 / ATCC 33152 / DSM 7513).